Here is a 197-residue protein sequence, read N- to C-terminus: Imidazoleglycerol-phosphate dehydratase (197 aa).

Belongs to the imidazoleglycerol-phosphate dehydratase family.

The protein resides in the cytoplasm. The enzyme catalyses D-erythro-1-(imidazol-4-yl)glycerol 3-phosphate = 3-(imidazol-4-yl)-2-oxopropyl phosphate + H2O. It participates in amino-acid biosynthesis; L-histidine biosynthesis; L-histidine from 5-phospho-alpha-D-ribose 1-diphosphate: step 6/9. In Halorhodospira halophila (strain DSM 244 / SL1) (Ectothiorhodospira halophila (strain DSM 244 / SL1)), this protein is Imidazoleglycerol-phosphate dehydratase.